We begin with the raw amino-acid sequence, 511 residues long: Exodeoxyribonuclease 7 large subunit (511 aa).

This sequence belongs to the XseA family. In terms of assembly, heterooligomer composed of large and small subunits.

It is found in the cytoplasm. The enzyme catalyses Exonucleolytic cleavage in either 5'- to 3'- or 3'- to 5'-direction to yield nucleoside 5'-phosphates.. Functionally, bidirectionally degrades single-stranded DNA into large acid-insoluble oligonucleotides, which are then degraded further into small acid-soluble oligonucleotides. The protein is Exodeoxyribonuclease 7 large subunit of Brucella canis (strain ATCC 23365 / NCTC 10854 / RM-666).